A 157-amino-acid chain; its full sequence is Phosphopantetheine adenylyltransferase (157 aa).

Residue T8 coordinates substrate. Residues 8-9 (TF) and H16 each bind ATP. The substrate site is built by K40, T72, and R86. ATP contacts are provided by residues 87-89 (GLR), E97, and 122-128 (YSFLSSS).

This sequence belongs to the bacterial CoaD family. In terms of assembly, homohexamer. Mg(2+) is required as a cofactor.

It is found in the cytoplasm. The catalysed reaction is (R)-4'-phosphopantetheine + ATP + H(+) = 3'-dephospho-CoA + diphosphate. Its pathway is cofactor biosynthesis; coenzyme A biosynthesis; CoA from (R)-pantothenate: step 4/5. Functionally, reversibly transfers an adenylyl group from ATP to 4'-phosphopantetheine, yielding dephospho-CoA (dPCoA) and pyrophosphate. In Prochlorococcus marinus (strain MIT 9312), this protein is Phosphopantetheine adenylyltransferase.